The chain runs to 302 residues: Cuticle collagen 40 (302 aa).

Disordered regions lie at residues 79-103 (RIKR…GGGG) and 119-302 (AGAP…APGY). Over residues 91 to 103 (YAEGGAAAGGGGG) the composition is skewed to gly residues. Triple-helical region regions lie at residues 114-143 (GAAG…AGSD), 162-185 (GPAG…DGNT), 189-221 (GGEG…PGQV), 226-252 (GTPG…AGAS), and 255-290 (GPAG…GGGC). Over residues 137–154 (PGTAGSDAEAAAAPTASD) the composition is skewed to low complexity. The span at 194–203 (AGPPGPPGPA) shows a compositional bias: pro residues. Composition is skewed to low complexity over residues 205 to 234 (NPGT…AGAA) and 245 to 281 (NPGS…PGEA). Pro residues predominate over residues 293–302 (CPPPRTAPGY).

The protein belongs to the cuticular collagen family. Collagen polypeptide chains are complexed within the cuticle by disulfide bonds and other types of covalent cross-links.

Its function is as follows. Nematode cuticles are composed largely of collagen-like proteins. The cuticle functions both as an exoskeleton and as a barrier to protect the worm from its environment. The chain is Cuticle collagen 40 (col-40) from Caenorhabditis elegans.